Reading from the N-terminus, the 148-residue chain is uncharacterized protein (148 aa).

Helical transmembrane passes span 20–42 (YYSK…IANY), 52–74 (YFLM…VRCY), and 118–135 (IIRY…CTYI).

The protein resides in the cell membrane. This is an uncharacterized protein from Rickettsia prowazekii (strain Madrid E).